The chain runs to 481 residues: Phloretin 4'-O-glucosyltransferase (481 aa).

The active-site Proton acceptor is His-16. Position 16 (His-16) interacts with an anthocyanidin. UDP-alpha-D-glucose is bound by residues Gln-354, His-369, Trp-372, Asn-373, Ser-374, Glu-377, Asp-393, and Gln-394.

It belongs to the UDP-glycosyltransferase family. Highly expressed in young leaves, at intermediate level in mature leaves and at low levels in flowers and fruits.

It carries out the reaction phloretin + UDP-alpha-D-glucose = trilobatin + UDP + H(+). It catalyses the reaction (2S)-naringenin + UDP-alpha-D-glucose = (2S)-naringenin 7-O-beta-D-glucoside + UDP + H(+). Its function is as follows. Glycosyltransferase that possesses phloretin 4'-O-glycosyltransferase activity. Converts phloretin to trilobatin (phloretin 4'-O-glucoside), a potential antioxidant. Can convert with low efficiency phlorizin and trilobatin to their corresponding di-O-glucosides. Can convert with low efficiency naringenin to naringenin-7-O-glucoside. Can convert with low efficiency quercetin to quercetin-7-O-glucoside. This is Phloretin 4'-O-glucosyltransferase from Malus domestica (Apple).